Consider the following 537-residue polypeptide: Cytochrome P450 monooxygenase claR (537 aa).

A helical transmembrane segment spans residues 23–43 (VVTITEVALGIITLYLLGSYI). Cys-454 is a heme binding site.

This sequence belongs to the cytochrome P450 family. The cofactor is heme.

It is found in the membrane. It catalyses the reaction (2E)-geranylhydroquinone + reduced [NADPH--hemoprotein reductase] + O2 = wigandol + oxidized [NADPH--hemoprotein reductase] + 2 H2O + H(+). It participates in secondary metabolite biosynthesis; terpenoid biosynthesis. Functionally, cytochrome P450 monooxygenase; part of the gene cluster that mediates the biosynthesis of clavilactone A, a meroterpenoid that features a unique benzo-fused ten-membered carbocyclic ring unit with an alpha,beta-epoxy-gamma-lactone moiety, forming an intriguing 10/5/3 tricyclic nested skeleton. ClaR, ClaS and ClaT are sufficient to produce clavilactone A. ClaR acts as a macrocyclase to catalyze the oxidative cyclization of the isopentenyl to the nonterpenoid moieties to form the benzo-fused macrocycle, leading to wigantol. The biosynthesis begins with the prenyltransferase claS that transfers geranyl pyrophosphate (GPP) to hydroquinone to produces geranylhydroquinone. The cytochrome P450 monooxygenase claR then catalyzes the diradical coupling reaction between the intramolecular hydroquinone and allyl moieties to form the benzo-fused ten-membered carbocyclic ring unit of wigantol. Finally the cytochrome P450 monooxygenase claT exquisitely and stereoselectively assembles the alpha,beta-epoxy-gamma-lactone moiety, producing clavilactone A via arnebinol A. The chain is Cytochrome P450 monooxygenase claR from Ampulloclitocybe clavipes (Club foot).